Consider the following 132-residue polypeptide: D-ribose pyranase (132 aa).

Residue histidine 20 is the Proton donor of the active site. Substrate-binding positions include aspartate 28, histidine 99, and 121–123 (YSN).

The protein belongs to the RbsD / FucU family. RbsD subfamily. Homodecamer.

It is found in the cytoplasm. The enzyme catalyses beta-D-ribopyranose = beta-D-ribofuranose. It functions in the pathway carbohydrate metabolism; D-ribose degradation; D-ribose 5-phosphate from beta-D-ribopyranose: step 1/2. Functionally, catalyzes the interconversion of beta-pyran and beta-furan forms of D-ribose. The sequence is that of D-ribose pyranase from Streptococcus agalactiae serotype Ia (strain ATCC 27591 / A909 / CDC SS700).